We begin with the raw amino-acid sequence, 149 residues long: uncharacterized protein (149 aa).

This is an uncharacterized protein from Aquifex aeolicus (strain VF5).